Consider the following 1133-residue polypeptide: uncharacterized protein (1133 aa).

Disordered stretches follow at residues 33–83 (QFED…NSSS), 305–629 (PVSN…NSNS), 679–723 (GKLD…SVKR), and 736–817 (IESP…SEEV). Low complexity predominate over residues 39–83 (NNNNSNNNNNNNNSNNNNSNNNENINRKTGSTLLSSSTSQLNSSS). The segment at residues 40-308 (NNNSNNNNNN…GHPTCNPVSN (269 aa)) is a DNA-binding region (NDT80). Residues 305 to 316 (PVSNNPSTPGTP) are compositionally biased toward polar residues. Over residues 317-384 (ISNFDSSNNN…NNNSSGNSSS (68 aa)) the composition is skewed to low complexity. Polar residues predominate over residues 401 to 417 (INSLSNHNSPHLTPIQY). The segment covering 418 to 452 (NNNNNNSNNNSNNNNNNNNNNNNSNNNNNNSNNNN) has biased composition (low complexity). Polar residues predominate over residues 453 to 470 (HQFQSNNRIFKGNLSNPF). Composition is skewed to low complexity over residues 473 to 615 (NYSQ…GNNS) and 686 to 714 (NNSN…NNNN). Residues 736 to 747 (IESPQSYISSPT) are compositionally biased toward polar residues. Residues 757–771 (QPQPQPQPQPQPQPQ) are compositionally biased toward pro residues. The segment covering 772 to 808 (PQSQSQSQSQSQSQSQSQSQSQSQPIQQIVQQQLSSP) has biased composition (low complexity). One can recognise a Peptidase S74 domain in the interval 909–1020 (SDKRVKENVK…KKVDNVCMEL (112 aa)). The chain crosses the membrane as a helical span at residues 1055-1075 (IFIGIGVFTLFVIFGLVAVSI). Residues 1107–1133 (SGSNSCYDSSSNSAIDTTTSTGSGSIK) are disordered.

The protein localises to the membrane. This is an uncharacterized protein from Dictyostelium discoideum (Social amoeba).